The sequence spans 473 residues: MAQHDFAPAWLNFPTPPSSTKSSLNFEKHSENFAWTENRYDVNRRRHNSSDGFDSAIGRPNGGNFGRKEKNGWRTHGRNGTENINHRGGYHGGSSRSRSSIFHAGKSQGLHENNIPDNETGRKEDKRERKQFEAEDFPSLNPEYEREPNHNKSLAAGVWEYPPNPKSRAPRMLVIKKGNTKDLQLSGFPVVGNLPSQPVKNGTGPSVYKGLVPKPAAPPTKPTQWKSQTKENKVGTSFPHESTFGVGNFNAFKSTAKNFSPSTNSVKECNRSNSSSPVDKLNQQPRLTKLTRMRTDKKSEFLKALKRDRVEEEHEDESRAGSEKDDDSFNLHNSNSTHQERDINRNFDENEIPQENGNASVISQQIIRSSTFPQTDVLSSSLEAEHRLLKEMGWQEDSENDETCAPLTEDEMREFQVISEQLQKNGLRKNGILKNGLICDFKFGPWKNSTFKPTTENDDTETSSSDTSDDDDV.

Disordered regions lie at residues M1–N25, R46–N149, and V191–D342. S49 carries the post-translational modification Phosphoserine. R87 carries the post-translational modification Omega-N-methylarginine. Residues E119–E133 are compositionally biased toward basic and acidic residues. 2 stretches are compositionally biased toward polar residues: residues L194–G204 and A251–R286. Residues S274, S276, S322, and S381 each carry the phosphoserine modification. The segment covering M293–F329 has biased composition (basic and acidic residues). The disordered stretch occupies residues G444–V473. The segment covering E456–V473 has biased composition (acidic residues).

It belongs to the vasculin family. As to quaternary structure, interacts with GTF2B, GTF2F2, RNA polymerase II and TBP. In terms of tissue distribution, widely expressed. Some isoforms may be specifically expressed in veins and arteries (at protein level). Isoform 4 is widely expressed. Isoform 1, isoform 2 and isoform 3 may be specifically expressed in vascular smooth muscle cells.

Its subcellular location is the nucleus. The protein resides in the cytoplasm. Functions as a GC-rich promoter-specific transactivating transcription factor. The protein is Vasculin (GPBP1) of Homo sapiens (Human).